The primary structure comprises 256 residues: uncharacterized protein (256 aa).

Positions 1 to 22 (MGYLKRIGMCISLLIVIIFVTS) are cleaved as a signal peptide. Residue C23 is the site of N-palmitoyl cysteine attachment. C23 carries S-diacylglycerol cysteine lipidation.

This sequence belongs to the staphylococcal tandem lipoprotein family.

The protein localises to the cell membrane. This is an uncharacterized protein from Staphylococcus aureus (strain MRSA252).